The chain runs to 593 residues: Capsid protein 1 (593 aa).

This sequence belongs to the NCLDV major capsid protein family.

It localises to the virion. This is Capsid protein 1 from Acanthamoeba polyphaga mimivirus (APMV).